A 352-amino-acid polypeptide reads, in one-letter code: Membrane progestin receptor alpha (352 aa).

Over 1-75 (MATVVMEQIG…FLTLFQRHNE (75 aa)) the chain is Cytoplasmic. The chain crosses the membrane as a helical span at residues 76 to 96 (TLNVWTHLLAAFIILVKWQEI). Residues 97 to 110 (SETVDFLRDPHAQP) are Extracellular-facing. The chain crosses the membrane as a helical span at residues 111–131 (LFIVLLAAFTYLSFSALAHLL). Residues 132–139 (SAKSELSY) are Cytoplasmic-facing. The chain crosses the membrane as a helical span at residues 140–160 (YTFYFLDYVGVAVYQYGSALA). Residues 161-175 (HYYYAIEKEWHTKVQ) are Extracellular-facing. The helical transmembrane segment at 176 to 196 (GLFLPAAAFLAWLTCFGCCYG) threads the bilayer. The Cytoplasmic segment spans residues 197-242 (KYASPELPKVANKLFQVVPSALAYCLDISPVVHRIYSCYQEGCSDP). Residues 243–263 (VVAYHFYHVVFFLIGAYFFCC) traverse the membrane as a helical segment. Residues 264–275 (PHPESLFPGKCD) lie on the Extracellular side of the membrane. The chain crosses the membrane as a helical span at residues 276 to 296 (FIGQGHQLFHVFVVVCTLTQV). The Cytoplasmic portion of the chain corresponds to 297–316 (EALRTDFTERRPFYERLHGD). A helical transmembrane segment spans residues 317-337 (LAHDAVALFIFTACCSALTAF). The Extracellular segment spans residues 338 to 352 (YVRQRVRASLHEKGE).

It belongs to the ADIPOR family. In terms of tissue distribution, strongly expressed in ovary and brain; lower expression in testis and pituitary. Not detected in heart, kidney, spleen, intestine, gill and muscle.

It is found in the cell membrane. Its function is as follows. Steroid membrane receptor. Binds progesterone, progestin and 17-hydroxyprogesterone in vitro. Capable of mediating progestin-induced oocyte maturation. The polypeptide is Membrane progestin receptor alpha (mpra) (Cynoscion nebulosus (Spotted seatrout)).